Reading from the N-terminus, the 606-residue chain is Ribonucleoprotein PTB-binding 1 (606 aa).

The interval 1–41 (MAADVSVTHRPPLSPKSGAEVEAGDAAERRAPEEELPPLDP) is disordered. Position 2 is an N-acetylalanine (Ala-2). 2 positions are modified to phosphoserine: Ser-6 and Ser-14. Residues 45–60 (RKRLEHTERQFRNRRK) carry the Nuclear localization signal motif. RRM domains follow at residues 59–130 (RKIL…LQPT), 132–210 (ALLC…WTDA), and 221–299 (RCLC…FCAP). The segment at 307 to 395 (LAALIAAQAT…QTQGQKKPGI (89 aa)) is interaction with PTBP1. Positions 391–474 (KKPGILGDSP…PPAPVGLRGS (84 aa)) are disordered. Over residues 453–462 (LGLGPPAAQL) the composition is skewed to low complexity. Thr-463 carries the phosphothreonine modification. A Phosphoserine modification is found at Ser-474. Position 488 is a phosphothreonine (Pro-488). The interval 519 to 564 (GLLGLSPGPNGHSHLLKVRAGGGDMQGWEAPAPQRPLTRPALPSVS) is disordered. Residues Ser-562 and His-567 each carry the phosphoserine modification. A disordered region spans residues 579–606 (CPRPSPAQKAAMWASTPRASAATTRTPT). Residues 592 to 606 (ASTPRASAATTRTPT) are compositionally biased toward low complexity.

As to quaternary structure, interacts with PTBP1, RAVER2, VCL and ACTN1. Part of a complex containing RAVER1, VCL and ACTN1.

It is found in the nucleus. It localises to the cytoplasm. Functionally, cooperates with PTBP1 to modulate regulated alternative splicing events. Promotes exon skipping. Cooperates with PTBP1 to modulate switching between mutually exclusive exons during maturation of the TPM1 pre-mRNA. The polypeptide is Ribonucleoprotein PTB-binding 1 (RAVER1) (Homo sapiens (Human)).